The sequence spans 214 residues: Cytochrome b (214 aa).

The next 4 helical transmembrane spans lie at 31–51, 75–96, 111–131, and 176–196; these read FGSMLLACLMIQIITGFFLAI, WIMQNTHAISASLFFICIYIHI, WLSGTTLLIILMATAFFGYVL, and FFALHFILPFIIISMSSIHIL. His81 and His95 together coordinate heme b. Positions 180 and 194 each coordinate heme b. Residue His199 participates in a ubiquinone binding.

Belongs to the cytochrome b family. The cytochrome bc1 complex contains 3 respiratory subunits (MT-CYB, CYC1 and UQCRFS1), 2 core proteins (UQCRC1 and UQCRC2) and probably 6 low-molecular weight proteins. The cofactor is heme b.

It is found in the mitochondrion inner membrane. Component of the ubiquinol-cytochrome c reductase complex (complex III or cytochrome b-c1 complex) that is part of the mitochondrial respiratory chain. The b-c1 complex mediates electron transfer from ubiquinol to cytochrome c. Contributes to the generation of a proton gradient across the mitochondrial membrane that is then used for ATP synthesis. The sequence is that of Cytochrome b (MT-CYB) from Bothrops atrox (Barba amarilla).